The primary structure comprises 690 residues: MSCFSQAINPITGQNSWQERGDDYDYHLEVANAGFGDMLHDWERNQKYFAALKKTIAGMREAGREVHVLDIGTGTGILSMMAVEAGADSVTACEAFLPMANCAERILAANGAGDKVRLIRKRSTEIQVGEDMPRKANLLVAELLDTELIGEGAIGIYNHAHAELLTEDALCIPARARCYAQVAQSPLAAQWNSLKTIANLDGEPLLHPPEQLKSCQGEAALHDVQLSQLPSSAFRPLTDPVEIFQFDFQRKQEREKQRAQLLKLQSKQPGAAELVFYWWDIQLDDGGEILLSCAPYWAHPQLKELAAEKGNDHPLPNVVPWRDHWMQAIYYIPKPLQLVEAGKSFHLSCHHDEYSLWFDAREEAPTKSVRRHTCTCDLHMTYSRSRIGQINQSPRNKRYLRYLEESIEAEKSNVLVLGNGCLLGLASSALGAASVLLHEPHRFSRRLLESIVKHNQLKNVQFLDKVEELEDSQLAALTHIFAEPYFLNAILPWDNFYFGTLLTKIKDRLPQNVKISPCSARIYALPVEFLDLHKIRAPVGSCEGFDLRLFDEMVERSAEQAVSLVEAQPLWEYPCRALSEPQEVLNVEFSNFSQEHSLKGSIELKHSGTCNGVALWVDWQLVEDNSPRSIVSSGPSEPVVPGEFVKWDMFVRQGVHFPRRPKEPITHLEWSTAFKPELGELNFTFGQKKL.

2 consecutive SAM-dependent MTase PRMT-type domains span residues 14-357 and 366-690; these read QNSW…YSLW and TKSV…QKKL.

Belongs to the class I-like SAM-binding methyltransferase superfamily. Protein arginine N-methyltransferase family. PRMT7 subfamily.

Essential arginine methyltransferase that can both catalyze the formation of omega-N monomethylarginine (MMA) and symmetrical dimethylarginine (sDMA). Specifically mediates the symmetrical dimethylation of arginine residues in the small nuclear ribonucleoproteins SmD1 and SmD3. The polypeptide is Protein arginine N-methyltransferase 7 (Art7) (Drosophila erecta (Fruit fly)).